Consider the following 449-residue polypeptide: Exodeoxyribonuclease 7 large subunit (449 aa).

This sequence belongs to the XseA family. As to quaternary structure, heterooligomer composed of large and small subunits.

The protein resides in the cytoplasm. It carries out the reaction Exonucleolytic cleavage in either 5'- to 3'- or 3'- to 5'-direction to yield nucleoside 5'-phosphates.. Functionally, bidirectionally degrades single-stranded DNA into large acid-insoluble oligonucleotides, which are then degraded further into small acid-soluble oligonucleotides. The sequence is that of Exodeoxyribonuclease 7 large subunit from Salmonella dublin (strain CT_02021853).